The sequence spans 401 residues: CCA-adding enzyme (401 aa).

Residues G32 and R35 each coordinate ATP. Positions 32 and 35 each coordinate CTP. D45 and D47 together coordinate Mg(2+). Residues R116, D159, R162, R165, and R168 each contribute to the ATP site. Residues R116, D159, R162, R165, and R168 each contribute to the CTP site.

This sequence belongs to the tRNA nucleotidyltransferase/poly(A) polymerase family. Bacterial CCA-adding enzyme type 3 subfamily. As to quaternary structure, homodimer. Requires Mg(2+) as cofactor.

The enzyme catalyses a tRNA precursor + 2 CTP + ATP = a tRNA with a 3' CCA end + 3 diphosphate. It carries out the reaction a tRNA with a 3' CCA end + 2 CTP + ATP = a tRNA with a 3' CCACCA end + 3 diphosphate. In terms of biological role, catalyzes the addition and repair of the essential 3'-terminal CCA sequence in tRNAs without using a nucleic acid template. Adds these three nucleotides in the order of C, C, and A to the tRNA nucleotide-73, using CTP and ATP as substrates and producing inorganic pyrophosphate. tRNA 3'-terminal CCA addition is required both for tRNA processing and repair. Also involved in tRNA surveillance by mediating tandem CCA addition to generate a CCACCA at the 3' terminus of unstable tRNAs. While stable tRNAs receive only 3'-terminal CCA, unstable tRNAs are marked with CCACCA and rapidly degraded. The sequence is that of CCA-adding enzyme from Leuconostoc mesenteroides subsp. mesenteroides (strain ATCC 8293 / DSM 20343 / BCRC 11652 / CCM 1803 / JCM 6124 / NCDO 523 / NBRC 100496 / NCIMB 8023 / NCTC 12954 / NRRL B-1118 / 37Y).